The following is a 381-amino-acid chain: NAD-dependent methanol dehydrogenase (381 aa).

The protein belongs to the iron-containing alcohol dehydrogenase family. Homodecamer. Requires Mg(2+) as cofactor. Zn(2+) is required as a cofactor.

The protein resides in the cytoplasm. It catalyses the reaction methanol + NAD(+) = formaldehyde + NADH + H(+). Its pathway is one-carbon metabolism; methanol degradation; formaldehyde from methanol: step 1/1. Its activity is regulated as follows. Stimulated by the activator protein Act which requires the presence of magnesium ions. Inhibited by 1,10-phenanthroline. In terms of biological role, catalyzes the oxidation of methanol to yield formaldehyde. It possesses a NADH-dependent formaldehyde reductase activity and cannot use NADP. This is NAD-dependent methanol dehydrogenase from Bacillus methanolicus.